The chain runs to 503 residues: Maturase K (503 aa).

It belongs to the intron maturase 2 family. MatK subfamily.

It is found in the plastid. The protein localises to the chloroplast. Its function is as follows. Usually encoded in the trnK tRNA gene intron. Probably assists in splicing its own and other chloroplast group II introns. This Thryptomene saxicola (Rock thryptomene) protein is Maturase K.